The chain runs to 203 residues: Outer-membrane lipoprotein carrier protein (203 aa).

Positions 1 to 21 (MKKMAIACALLSSVVASSVWA) are cleaved as a signal peptide. A disordered region spans residues 178-203 (QQNGAVDPSKFTFTPPQGVTIDDQRK).

Belongs to the LolA family. Monomer.

The protein localises to the periplasm. Its function is as follows. Participates in the translocation of lipoproteins from the inner membrane to the outer membrane. Only forms a complex with a lipoprotein if the residue after the N-terminal Cys is not an aspartate (The Asp acts as a targeting signal to indicate that the lipoprotein should stay in the inner membrane). The chain is Outer-membrane lipoprotein carrier protein from Salmonella paratyphi A (strain ATCC 9150 / SARB42).